The chain runs to 339 residues: MSSGRGSRIPEYWYGQVPVPPFMRFMEVIYAGAVSLRRLAYRRGWRRRYGVAVPVVVIGNLVAGGTGKTPLTIEIVARLREAGWTPGIASRGYGRRDLKTPRWIQPDTPIELAGDEPAMIAWKTGMRVRVDVDRSAAACALVAEGCDIVVCDDGLQHYRLMRDIEIEVIDGQRRYGNGHLLPAGPLREPMVRGRLCDFRVLNAGQYSDRPTSGFGPGDWQMRLHIDHAQSLQGSRRRSLDAFSGQRVHAVAGIAHPERFFSMLRQRGIGVVPHAFPDHHFYRAEDFTFGSRLPVLMTEKDAVKCRAFADDWFFSVPLRVELPTVFWTALFDRLERLVSC.

Residue 62-69 participates in ATP binding; it reads VAGGTGKT.

This sequence belongs to the LpxK family.

It carries out the reaction a lipid A disaccharide + ATP = a lipid IVA + ADP + H(+). It functions in the pathway glycolipid biosynthesis; lipid IV(A) biosynthesis; lipid IV(A) from (3R)-3-hydroxytetradecanoyl-[acyl-carrier-protein] and UDP-N-acetyl-alpha-D-glucosamine: step 6/6. In terms of biological role, transfers the gamma-phosphate of ATP to the 4'-position of a tetraacyldisaccharide 1-phosphate intermediate (termed DS-1-P) to form tetraacyldisaccharide 1,4'-bis-phosphate (lipid IVA). This chain is Tetraacyldisaccharide 4'-kinase, found in Xylella fastidiosa (strain M12).